Consider the following 28-residue polypeptide: Short cationic peptide-1a (28 aa).

At glutamate 28 the chain carries Glutamic acid 1-amide.

In terms of tissue distribution, expressed by the venom gland.

The protein resides in the secreted. The protein is Short cationic peptide-1a of Cupiennius salei (American wandering spider).